The following is a 572-amino-acid chain: MASTKIDDKVSIPGPVTGTGNSRFLIVSHENGGIWDLVRFGVWGNKESGDKFLHYSAGGGLLEEHLVRSDDSGGGDDRGGEVPDHRWVIFVSIIVRKLIAIFGKPMEWTGYLVEFFLNLFSLNGNFLGLLYNILHGKVVMPHRGSETFISAIGHLDGRINLYKSETLTKEIGEPDFWQKIGIGHRDLMDLCMMASKLAYENEKVVRNVVNLHWKMHFVDFYNCWNDFEKEMSTQVFLLCDKPKDANLILVSFRGTEPFDADDWITDFDYSWYEIPKLGKVHMGFLEALGLGNRTNASTFHEQLFVNNLKFANLENVHATIPPSESSKSSTSFSDSDAHTGSDLSSDSERPTDTRKKKFRLEIPERTAYYVVRSKLKRLLKEHKNAKFVVTGHSLGGALAILFPAVLVLHEEVDVMERLLGIYTYGQPRVGNRQLGRFMEAHLEHPVPKYFRVVYCNDLVPRLPYDNKTFLFKHFGICQYYNSLYIEQNINEEPNPNYFGMRFLVPLYLNAGWELIRSFTMGYMYGSEYEECWESVMLRALGLFLPGISAHSPVDYVNSIRLGKARSTQMSSF.

A helical membrane pass occupies residues 110-130 (GYLVEFFLNLFSLNGNFLGLL). Residues 320–356 (IPPSESSKSSTSFSDSDAHTGSDLSSDSERPTDTRKK) form a disordered region. A compositionally biased stretch (low complexity) spans 323 to 334 (SESSKSSTSFSD). Positions 346–356 (DSERPTDTRKK) are enriched in basic and acidic residues. The GXSXG motif lies at 391-395 (GHSLG). Residue serine 393 is the Nucleophile of the active site. Residues aspartate 457 and histidine 550 each act as charge relay system in the active site.

Belongs to the AB hydrolase superfamily. Lipase family. Expressed in pollen grains and pollen tubes.

It is found in the lipid droplet. The protein resides in the membrane. It carries out the reaction 1,2-di-(9Z-octadecenoyl)-glycerol + (9Z)-octadecenoate + H(+) = 1,2,3-tri-(9Z-octadecenoyl)-glycerol + H2O. The enzyme catalyses 1-(9Z-octadecenoyl)-glycerol + H2O = glycerol + (9Z)-octadecenoate + H(+). In terms of biological role, acid lipase that can hydrolyze a range of triacylglycerols without a clear preference for acyl-chains. Can also cleave 1,2-diacylglycerol, 1,3-diacylglycerol and 1-monoacylglycerol, but not phosphatidylcholine, phosphatidylethanolamine, or sterol esters. Required for pollen tube growth. Triacylglycerol hydrolysis by OBL1 may provide acyl groups for the synthesis of membrane lipids in growing pollen tubes. This Nicotiana tabacum (Common tobacco) protein is Triacylglycerol lipase OBL1.